A 550-amino-acid polypeptide reads, in one-letter code: Solute carrier family 22 member 6 (550 aa).

Topologically, residues 1–9 (MAFNDLLQQ) are cytoplasmic. Residues 10 to 30 (VGGVGRFQQIQVTLVVLPLLL) traverse the membrane as a helical segment. Residues 31–135 (MASHNTLQNF…LVCSHRALRQ (105 aa)) lie on the Extracellular side of the membrane. 3 N-linked (GlcNAc...) asparagine glycosylation sites follow: N39, N92, and N113. Residues 136–156 (LAQSLYMVGVLLGAMVFGYLA) form a helical membrane-spanning segment. Over 157 to 164 (DRLGRRKV) the chain is Cytoplasmic. The helical transmembrane segment at 165–187 (LILNYLQTAVSGTCTAFAPNFSI) threads the bilayer. Topologically, residues 188–195 (YCAFRLLS) are extracellular. A helical transmembrane segment spans residues 196–216 (GMSLAGISLNCMTLNVEWMPI). The Cytoplasmic segment spans residues 217 to 224 (HTRACVGT). The chain crosses the membrane as a helical span at residues 225–245 (LIGYVYSLGQFLLAGVAYAVP). The Extracellular segment spans residues 246–248 (HWR). The chain crosses the membrane as a helical span at residues 249–269 (HLQLLVSAPFFAFFIYSWFFI). The Cytoplasmic segment spans residues 270–337 (ESARWHSSSG…ELLRCPTLRH (68 aa)). Residues 338–358 (LFLCLSMLWFATSFAYYGLVM) form a helical membrane-spanning segment. Residues 359 to 368 (DLQGFGVSIY) lie on the Extracellular side of the membrane. The chain crosses the membrane as a helical span at residues 369-389 (LIQVIFGAVDLPAKLVGFLVI). Residues 390–395 (NSLGRR) lie on the Cytoplasmic side of the membrane. The helical transmembrane segment at 396 to 416 (PAQMAALLLAGICILLNGVIP) threads the bilayer. At 417-420 (QDQS) the chain is on the extracellular side. A helical transmembrane segment spans residues 421–444 (IVRTSLAVPGKGCLAASFNCIFLY). Topologically, residues 445 to 455 (TGELYPTMIRQ) are cytoplasmic. Residues 456 to 475 (TGMGMGSTMARVGSIVSPLV) traverse the membrane as a helical segment. The Extracellular segment spans residues 476–484 (SMTAELYPS). The chain crosses the membrane as a helical span at residues 485 to 505 (MPLFIYGAVPVAASAVTVLLP). Residues 506 to 550 (ETLGQPLPDTVQDLESRKGKQTRQQQEHQKYMVPLQASAQEKNGL) lie on the Cytoplasmic side of the membrane. Residues 514 to 550 (DTVQDLESRKGKQTRQQQEHQKYMVPLQASAQEKNGL) are disordered.

Belongs to the major facilitator (TC 2.A.1) superfamily. Organic cation transporter (TC 2.A.1.19) family. Post-translationally, glycosylated. Glycosylation is necessary for proper targeting of the transporter to the plasma membrane.

It localises to the cell membrane. It carries out the reaction prostaglandin F2alpha(out) = prostaglandin F2alpha(in). The enzyme catalyses prostaglandin E2(out) = prostaglandin E2(in). Its function is as follows. Involved in the renal elimination of endogenous and exogenous organic anions. Functions as organic anion exchanger when the uptake of one molecule of organic anion is coupled with an efflux of one molecule of endogenous dicarboxylic acid (glutarate, ketoglutarate, etc). Mediates the transport of prostaglandin E2 (PGE2) and prostaglandin F2-alpha (PGF2-alpha) and may be involved in their renal excretion. Also mediates the sodium-independent uptake of p-aminohippurate (PAH), 2,3-dimercapto-1-propanesulfonic acid (DMPS), cidofovir, adefovir, 9-(2-phosphonylmethoxyethyl) guanine (PMEG), 9-(2-phosphonylmethoxyethyl) diaminopurine (PMEDAP), ochratoxin (OTA), acyclovir (ACV), 3'-azido-3-'deoxythymidine (AZT), cimetidine (CMD), 2,4-dichloro-phenoxyacetate (2,4-D), hippurate (HA), indoleacetate (IA), indoxyl sulfate (IS) and 3-carboxy-4-methyl-5-propyl-2-furanpropionate (CMPF) and edaravone sulfate. PAH uptake is inhibited by p-chloromercuribenzenesulphonate (PCMBS), diethyl pyrocarbonate (DEPC), indomethacin, sulindac, diclofenac, carprofen, okadaic acid, benzothiazolylcysteine (BTC), S-chlorotrifluoroethylcysteine (CTFC), cysteine S-conjugates S-dichlorovinylcysteine (DCVC), furosemide, steviol, phorbol 12-myristate 13-acetate (PMA), calcium ionophore A23187, benzylpenicillin, bumetamide, losartan, probenecid, phenol red, urate, glutarate and alpha-ketoglutarate. In Pongo abelii (Sumatran orangutan), this protein is Solute carrier family 22 member 6 (SLC22A6).